A 144-amino-acid chain; its full sequence is Acidic phospholipase A2 S15-109 (144 aa).

The first 19 residues, 1 to 19, serve as a signal peptide directing secretion; the sequence is MYPAHLLVLLAVCVSLLGA. A propeptide spanning residues 20-27 is cleaved from the precursor; the sequence is SDIPPQPL. Intrachain disulfides connect Cys38/Cys98, Cys54/Cys143, Cys56/Cys72, Cys71/Cys126, Cys78/Cys119, Cys87/Cys112, and Cys105/Cys117. Residues Tyr55, Gly57, and Gly59 each coordinate Ca(2+). Residue His75 is part of the active site. Asp76 contacts Ca(2+). Residue Asp120 is part of the active site.

Belongs to the phospholipase A2 family. Group I subfamily. D49 sub-subfamily. Ca(2+) is required as a cofactor. Expressed by the venom gland.

The protein localises to the secreted. It carries out the reaction a 1,2-diacyl-sn-glycero-3-phosphocholine + H2O = a 1-acyl-sn-glycero-3-phosphocholine + a fatty acid + H(+). Its function is as follows. Snake venom phospholipase A2 (PLA2) that inhibits collagen-induced platelet aggregation. PLA2 catalyzes the calcium-dependent hydrolysis of the 2-acyl groups in 3-sn-phosphoglycerides. The chain is Acidic phospholipase A2 S15-109 from Austrelaps superbus (Lowland copperhead snake).